We begin with the raw amino-acid sequence, 283 residues long: NAD kinase (283 aa).

Asp73 (proton acceptor) is an active-site residue. NAD(+)-binding positions include 73–74, 146–147, His157, His176, Asp178, 189–194, and Ala213; these read DG, NE, and TAYNLS.

It belongs to the NAD kinase family. Requires a divalent metal cation as cofactor.

It is found in the cytoplasm. The catalysed reaction is NAD(+) + ATP = ADP + NADP(+) + H(+). Involved in the regulation of the intracellular balance of NAD and NADP, and is a key enzyme in the biosynthesis of NADP. Catalyzes specifically the phosphorylation on 2'-hydroxyl of the adenosine moiety of NAD to yield NADP. In Haloarcula marismortui (strain ATCC 43049 / DSM 3752 / JCM 8966 / VKM B-1809) (Halobacterium marismortui), this protein is NAD kinase.